Here is a 3114-residue protein sequence, read N- to C-terminus: Centromere protein F (3114 aa).

An interaction with SNAP25 and required for localization to the cytoplasm region spans residues 1-481; that stretch reads MSWALEEWKE…IKENELRRSM (481 aa). Residues 13–131 are a coiled coil; that stretch reads PTRALQKIQE…KSELERSQQA (119 aa). S106 is subject to Phosphoserine. 3 positions are modified to phosphothreonine: T144, T151, and T154. Residue Y158 is modified to Phosphotyrosine. Positions 211 to 235 are enriched in polar residues; it reads QASSSVFSWQQEKTPSHLSSNSQRT. The disordered stretch occupies residues 211-236; the sequence is QASSSVFSWQQEKTPSHLSSNSQRTP. S242 and S276 each carry phosphoserine. Positions 280–685 form a coiled coil; the sequence is LDQLKAQNQE…SVEIRNLHNV (406 aa). S773, S783, S821, S834, S838, and S876 each carry phosphoserine. Coiled-coil stretches lie at residues 899–989 and 1196–1244; these read VAET…LNQE and LEVK…IRGD. A phosphoserine mark is found at S1248, S1255, and S1259. A coiled-coil region spans residues 1549–1646; sequence VEELESLCEV…ELEVARLQLQ (98 aa). A phosphoserine mark is found at S1651, S1652, and S1654. Disordered regions lie at residues 1667–1690 and 1710–1746; these read RNES…KHDV and TETG…SECI. Over residues 1669–1690 the composition is skewed to basic and acidic residues; that stretch reads ESCDISKEHTSETTERTPKHDV. S1726 bears the Phosphoserine mark. T1862 is modified (phosphothreonine). Residues S1868 and S1892 each carry the phosphoserine modification. 2 coiled-coil regions span residues 1890–2078 and 2107–2891; these read NDSW…LQAR and LSST…LCSQ. Residues 2026 to 2351 are interaction with NDE1 and NDEL1; that stretch reads LLKDKTHLQE…ERELEIARTN (326 aa). Repeat copies occupy residues 2111 to 2290 and 2293 to 2472. Residues 2111-2472 form a 2 X 177 AA tandem repeats region; that stretch reads QEEVHQLRRG…ACKAKEQNLS (362 aa). Residues 2392–2829 are sufficient for self-association; that stretch reads SEKENLTNEL…QAAQEKQKTG (438 aa). Residues 2392–3017 are sufficient for centromere localization; it reads SEKENLTNEL…ATRTSPRLAA (626 aa). 2 positions are modified to phosphoserine: S2416 and S2417. K2779 carries the post-translational modification N6-acetyllysine. A sufficient for nuclear localization region spans residues 2831–3017; the sequence is VMDTKVDELT…ATRTSPRLAA (187 aa). The tract at residues 2891–2977 is disordered; it reads QQSKQDSRGS…AEDTEGTEFE (87 aa). S2900, S2911, S2922, and S2936 each carry phosphoserine. A Nuclear localization signal motif is present at residues 2919-2936; sequence KRLSSGQNKASGKRQRSS. A Phosphothreonine modification is found at T2949. A phosphoserine mark is found at S2952, S2998, S3023, and S3026. Positions 3024–3114 are disordered; that stretch reads PLSLGKENLA…SNGSENCKVQ (91 aa). Residues 3033–3045 are compositionally biased toward polar residues; it reads AESSKPTAGGSRS. Phosphoserine occurs at positions 3054, 3079, and 3083. Residues 3079–3089 are compositionally biased toward basic and acidic residues; the sequence is SPTDSPREGLR. Residues 3105 to 3114 are compositionally biased toward polar residues; that stretch reads SNGSENCKVQ. C3111 is subject to Cysteine methyl ester. C3111 carries S-farnesyl cysteine lipidation. Residues 3112 to 3114 constitute a propeptide, removed in mature form; that stretch reads KVQ.

It belongs to the centromere protein F family. In terms of assembly, interacts with and STX4 (via C-terminus). Interacts (via N-terminus) with RBL1, RBL2 and SNAP25. Self-associates. Interacts with CENP-E and BUBR1 (via C-terminus). Interacts (via C-terminus) with NDE1, NDEL1 and RB1. Post-translationally, hyperphosphorylated during mitosis.

Its subcellular location is the cytoplasm. The protein localises to the perinuclear region. It localises to the nucleus matrix. The protein resides in the chromosome. It is found in the centromere. Its subcellular location is the kinetochore. The protein localises to the cytoskeleton. It localises to the spindle. In terms of biological role, required for kinetochore function and chromosome segregation in mitosis. Required for kinetochore localization of dynein, LIS1, NDE1 and NDEL1. Regulates recycling of the plasma membrane by acting as a link between recycling vesicles and the microtubule network though its association with STX4 and SNAP25. Acts as a potential inhibitor of pocket protein-mediated cellular processes during development by regulating the activity of RB proteins during cell division and proliferation. May play a regulatory or permissive role in the normal embryonic cardiomyocyte cell cycle and in promoting continued mitosis in transformed, abnormally dividing neonatal cardiomyocytes. Interaction with RB directs embryonic stem cells toward a cardiac lineage. Involved in the regulation of DNA synthesis and hence cell cycle progression, via its C-terminus. Has a potential role regulating skeletal myogenesis and in cell differentiation in embryogenesis. Involved in dendritic cell regulation of T-cell immunity against chlamydia. This chain is Centromere protein F (CENPF), found in Homo sapiens (Human).